The primary structure comprises 307 residues: Glycerol-3-phosphate dehydrogenase [NAD(P)+] (307 aa).

Residues Trp14, Arg34, Arg35, and Lys82 each coordinate NADPH. Positions 82 and 110 each coordinate sn-glycerol 3-phosphate. An NADPH-binding site is contributed by Ser114. Positions 165, 218, 228, 229, and 230 each coordinate sn-glycerol 3-phosphate. Lys165 (proton acceptor) is an active-site residue. Arg229 contacts NADPH. Glu255 is a binding site for NADPH.

It belongs to the NAD-dependent glycerol-3-phosphate dehydrogenase family.

The protein resides in the cytoplasm. The catalysed reaction is sn-glycerol 3-phosphate + NAD(+) = dihydroxyacetone phosphate + NADH + H(+). The enzyme catalyses sn-glycerol 3-phosphate + NADP(+) = dihydroxyacetone phosphate + NADPH + H(+). The protein operates within membrane lipid metabolism; glycerophospholipid metabolism. Its function is as follows. Catalyzes the reduction of the glycolytic intermediate dihydroxyacetone phosphate (DHAP) to sn-glycerol 3-phosphate (G3P), the key precursor for phospholipid synthesis. This is Glycerol-3-phosphate dehydrogenase [NAD(P)+] from Trichormus variabilis (strain ATCC 29413 / PCC 7937) (Anabaena variabilis).